We begin with the raw amino-acid sequence, 188 residues long: Probable chemoreceptor glutamine deamidase CheD (188 aa).

It belongs to the CheD family.

It catalyses the reaction L-glutaminyl-[protein] + H2O = L-glutamyl-[protein] + NH4(+). In terms of biological role, probably deamidates glutamine residues to glutamate on methyl-accepting chemotaxis receptors (MCPs), playing an important role in chemotaxis. The chain is Probable chemoreceptor glutamine deamidase CheD from Caulobacter sp. (strain K31).